The sequence spans 968 residues: MPFTLGQRWISDTESELGLGTVVAVDTRMVTLLFPATGENRLYARNDSPITRVVFNPGDTITSHEGWQLDVDEITTANGVVSYIGTRLDTSETGVVLREVMLDSKLVFGKPQDRLFAGQLDRMDRFALRFRARKYQSEQYRLATSGLRGMRTSLIPHQLHIAHDVGRRHAPRVLLADEVGLGKTIEAGMIIHQQLQAGRAERVLIVVPETLQHQWLVEMLRRFNLRFALFDDDRYAQAQLDSDNPFDTEQMIICSLDFVRRNKQRLEKLADAEWDLMVVDEAHHLVWSEDAPSREYQVIEQLAEQVPGILLLTATPEQLGMESHFARLRLLDPDRFHDFAQFVEEQKHFSPIADAVTLLLADQKIGNDELNLLNDLMGEQDIEPLLQTANSDREGKLAARQELISMLMDRHGTSRVLFRNTRNGVKGFPKRELHQIRLPLPTQYQTAIKVSGIMSARKTADERAQDMLYPEQIYQEFEGDSGTWWNFDPRVEWLMGYLTSNRDKKVLVICAKAATALQLEQVLREREGIRAAVFHEGLSIIERDRAAAWFASEEDGAQVLLCSEIGSEGRNFQFASQMVMFDLPFNPDLLEQRIGRLDRIGQVHDIQIHVPYLEKTAQAVLVQWYHEGLDAFEHTCPTGRAVYDSVYTQLIAYLAAPENSEGLEAFIQHCRKQHDTLKAQLEQGRDRLLELNSNGGEKGQALADMIAEQDNNIELVNFALNLFDIVGINQEDRSDNLIVLTPGDHMLVPDFPGLPEDGCTITFDRNQALSREDAQYVSWEHPIIRNGLDLILSGDTGSCAISLLKNKALPVGTLLVELIYVVEAQAPKHLQLTRFLPPTPIRMMVDRKGNNLAAKVEFESFNRQLNAVNRHTGSKLVNAVQSDVHEIITLSEDQAAAEARKVIDAARQEADEKLSAELSRLQALSAVNPNIRQDEIDALESNRQQVLSNLDEAGWRLDALRLIVVTHQ.

The Helicase ATP-binding domain maps to 164 to 334 (DVGRRHAPRV…FARLRLLDPD (171 aa)). 177–184 (DEVGLGKT) lines the ATP pocket. The DEAH box signature appears at 280–283 (DEAH). The region spanning 490–643 (RVEWLMGYLT…HTCPTGRAVY (154 aa)) is the Helicase C-terminal domain.

The protein belongs to the SNF2/RAD54 helicase family. RapA subfamily. In terms of assembly, interacts with the RNAP. Has a higher affinity for the core RNAP than for the holoenzyme. Its ATPase activity is stimulated by binding to RNAP.

Its function is as follows. Transcription regulator that activates transcription by stimulating RNA polymerase (RNAP) recycling in case of stress conditions such as supercoiled DNA or high salt concentrations. Probably acts by releasing the RNAP, when it is trapped or immobilized on tightly supercoiled DNA. Does not activate transcription on linear DNA. Probably not involved in DNA repair. This is RNA polymerase-associated protein RapA from Erwinia tasmaniensis (strain DSM 17950 / CFBP 7177 / CIP 109463 / NCPPB 4357 / Et1/99).